The chain runs to 593 residues: Arginine--tRNA ligase (593 aa).

The 'HIGH' region motif lies at 138 to 148 (ANPTGPLHVGH).

Belongs to the class-I aminoacyl-tRNA synthetase family. As to quaternary structure, monomer.

The protein localises to the cytoplasm. The enzyme catalyses tRNA(Arg) + L-arginine + ATP = L-arginyl-tRNA(Arg) + AMP + diphosphate. The sequence is that of Arginine--tRNA ligase from Burkholderia cenocepacia (strain ATCC BAA-245 / DSM 16553 / LMG 16656 / NCTC 13227 / J2315 / CF5610) (Burkholderia cepacia (strain J2315)).